Here is a 284-residue protein sequence, read N- to C-terminus: tRNA pseudouridine synthase A (284 aa).

Asp-52 serves as the catalytic Nucleophile. Tyr-149 contributes to the substrate binding site.

Belongs to the tRNA pseudouridine synthase TruA family. Homodimer.

It catalyses the reaction uridine(38/39/40) in tRNA = pseudouridine(38/39/40) in tRNA. Its function is as follows. Formation of pseudouridine at positions 38, 39 and 40 in the anticodon stem and loop of transfer RNAs. This is tRNA pseudouridine synthase A from Orientia tsutsugamushi (strain Boryong) (Rickettsia tsutsugamushi).